Reading from the N-terminus, the 483-residue chain is Glutamate--tRNA ligase (483 aa).

The short motif at 11-21 (PSPTGHLHIGN) is the 'HIGH' region element. The 'KMSKS' region motif lies at 252-256 (KLSKR). Residue K255 participates in ATP binding.

The protein belongs to the class-I aminoacyl-tRNA synthetase family. Glutamate--tRNA ligase type 1 subfamily. Monomer.

The protein localises to the cytoplasm. The catalysed reaction is tRNA(Glu) + L-glutamate + ATP = L-glutamyl-tRNA(Glu) + AMP + diphosphate. Its function is as follows. Catalyzes the attachment of glutamate to tRNA(Glu) in a two-step reaction: glutamate is first activated by ATP to form Glu-AMP and then transferred to the acceptor end of tRNA(Glu). The polypeptide is Glutamate--tRNA ligase (Bacillus velezensis (strain DSM 23117 / BGSC 10A6 / LMG 26770 / FZB42) (Bacillus amyloliquefaciens subsp. plantarum)).